The sequence spans 193 residues: Superoxide dismutase [Fe] (193 aa).

Positions 27, 74, 157, and 161 each coordinate Fe cation.

It belongs to the iron/manganese superoxide dismutase family. As to quaternary structure, monomer. Fe cation is required as a cofactor.

It catalyses the reaction 2 superoxide + 2 H(+) = H2O2 + O2. In terms of biological role, destroys superoxide anion radicals which are normally produced within the cells and which are toxic to biological systems. Involved in the metabolism of 4-aminophenol. May have an indirect role in hydroxyquinol metabolism by scavenging and detoxifying reactive species that promote its auto-oxidation. The polypeptide is Superoxide dismutase [Fe] (Burkholderia sp).